A 394-amino-acid chain; its full sequence is Fructose-bisphosphate aldolase, chloroplastic (394 aa).

Residues 1–46 (MASASLLKTSPVLDNPEFLKGQTLRIPSVAGVRFTPSGSSSLTVRA) constitute a chloroplast transit peptide. Substrate contacts are provided by R93 and K183. The Proton acceptor role is filled by E223. K265 functions as the Schiff-base intermediate with dihydroxyacetone-P in the catalytic mechanism.

It belongs to the class I fructose-bisphosphate aldolase family.

It is found in the plastid. Its subcellular location is the chloroplast. The catalysed reaction is beta-D-fructose 1,6-bisphosphate = D-glyceraldehyde 3-phosphate + dihydroxyacetone phosphate. It functions in the pathway carbohydrate degradation; glycolysis; D-glyceraldehyde 3-phosphate and glycerone phosphate from D-glucose: step 4/4. The chain is Fructose-bisphosphate aldolase, chloroplastic from Spinacia oleracea (Spinach).